The chain runs to 342 residues: S-adenosylmethionine:tRNA ribosyltransferase-isomerase (342 aa).

The protein belongs to the QueA family. As to quaternary structure, monomer.

The protein resides in the cytoplasm. It catalyses the reaction 7-aminomethyl-7-carbaguanosine(34) in tRNA + S-adenosyl-L-methionine = epoxyqueuosine(34) in tRNA + adenine + L-methionine + 2 H(+). It functions in the pathway tRNA modification; tRNA-queuosine biosynthesis. Its function is as follows. Transfers and isomerizes the ribose moiety from AdoMet to the 7-aminomethyl group of 7-deazaguanine (preQ1-tRNA) to give epoxyqueuosine (oQ-tRNA). The sequence is that of S-adenosylmethionine:tRNA ribosyltransferase-isomerase from Streptococcus pneumoniae serotype 4 (strain ATCC BAA-334 / TIGR4).